The chain runs to 239 residues: Protein TrbH (239 aa).

Residues 208–228 traverse the membrane as a helical segment; that stretch reads TVVSIICLLMWICLVYIHCGI.

The protein resides in the cell inner membrane. This Escherichia coli (strain K12) protein is Protein TrbH (trbH).